We begin with the raw amino-acid sequence, 119 residues long: Large ribosomal subunit protein bL20 (119 aa).

The protein belongs to the bacterial ribosomal protein bL20 family.

In terms of biological role, binds directly to 23S ribosomal RNA and is necessary for the in vitro assembly process of the 50S ribosomal subunit. It is not involved in the protein synthesizing functions of that subunit. The protein is Large ribosomal subunit protein bL20 of Xanthomonas campestris pv. campestris (strain 8004).